A 301-amino-acid chain; its full sequence is 2-(hydroxymethyl)glutarate dehydrogenase (301 aa).

NAD(+)-binding positions include 8 to 22 and S99; that span reads GFIG…MAIN. The active site involves K174. K243 provides a ligand contact to NAD(+).

The protein belongs to the HIBADH-related family. Homotetramer.

The enzyme catalyses (S)-2-hydroxymethylglutarate + NAD(+) = 2-formylglutarate + NADH + H(+). The protein operates within cofactor degradation; nicotinate degradation; propanoate and pyruvate from 6-hydroxynicotinate: step 3/8. Its function is as follows. Catalyzes the conversion of 2-formylglutarate to (S)-2-hydroxymethylglutarate. Has very low activity with (S)-3-hydroxyisobutyrate. This Eubacterium barkeri (Clostridium barkeri) protein is 2-(hydroxymethyl)glutarate dehydrogenase.